The following is a 151-amino-acid chain: NADPH-dependent 7-cyano-7-deazaguanine reductase (151 aa).

Catalysis depends on cysteine 51, which acts as the Thioimide intermediate. Aspartate 58 (proton donor) is an active-site residue. Substrate is bound by residues 73–75 and 92–93; these read VES and HE.

It belongs to the GTP cyclohydrolase I family. QueF type 1 subfamily.

The protein resides in the cytoplasm. It catalyses the reaction 7-aminomethyl-7-carbaguanine + 2 NADP(+) = 7-cyano-7-deazaguanine + 2 NADPH + 3 H(+). It participates in tRNA modification; tRNA-queuosine biosynthesis. Functionally, catalyzes the NADPH-dependent reduction of 7-cyano-7-deazaguanine (preQ0) to 7-aminomethyl-7-deazaguanine (preQ1). In Bacteroides fragilis (strain YCH46), this protein is NADPH-dependent 7-cyano-7-deazaguanine reductase.